The primary structure comprises 360 residues: Small ribosomal subunit protein bS1m (360 aa).

The span at 1–15 (MSSSNLSSILRNSRI) shows a compositional bias: low complexity. Residues 1-31 (MSSSNLSSILRNSRIAQVPKPKGPLFSPDKK) are disordered.

It belongs to the bacterial ribosomal protein bS1 family. In terms of assembly, component of the mitochondrial small ribosomal subunit.

The protein resides in the mitochondrion. Involved in mitochondrial genome encoded proteins translation. This chain is Small ribosomal subunit protein bS1m (MRP51), found in Eremothecium gossypii (strain ATCC 10895 / CBS 109.51 / FGSC 9923 / NRRL Y-1056) (Yeast).